A 196-amino-acid polypeptide reads, in one-letter code: Gastrula zinc finger protein XlCGF8.2DB (196 aa).

7 consecutive C2H2-type zinc fingers follow at residues 6 to 28 (FTCKECGKGFTQKRNLASHMTIH), 34 to 56 (FSCTECGKGFTQKRNLASHLTIH), 62 to 84 (FPCTECGKGFTQKSNLVSHMKIH), 90 to 112 (FTCTECGKEFAHKHRLLGHLKIH), 118 to 140 (FSCTECGKHFAHKYHLVSHMKIH), 146 to 168 (FTCTECGEHFANKVSLLGHLKMH), and 174 to 196 (FTCTECGNSFTQVSSLVSHMKIH).

Belongs to the krueppel C2H2-type zinc-finger protein family.

Its subcellular location is the nucleus. Its function is as follows. May be involved in transcriptional regulation. The sequence is that of Gastrula zinc finger protein XlCGF8.2DB from Xenopus laevis (African clawed frog).